Consider the following 117-residue polypeptide: Minor capsid protein VP2 (117 aa).

The protein belongs to the lagovirus VP2 protein family. In terms of assembly, homooligomer. The portal-like structure consists in 12 copies of VP2. Interacts with capsid protein VP1.

The protein localises to the virion. It is found in the host cytoplasm. In terms of biological role, minor structural protein that forms a portal-like structure at a unique three-fold axis of symmetry, following binding to the host receptor. The channel formed by VP2 may allow the delivery of the viral genome through the host endosomal membrane. This Rabbit hemorrhagic disease virus (strain AST89) (Ra/LV/RHDV/AST89/1989/SP) protein is Minor capsid protein VP2.